Consider the following 63-residue polypeptide: Large ribosomal subunit protein bL35 (63 aa).

Positions 26-50 (GSGMRHNLEHKSARKRRALKRDDVL) are disordered.

Belongs to the bacterial ribosomal protein bL35 family.

This Bifidobacterium animalis subsp. lactis (strain AD011) protein is Large ribosomal subunit protein bL35.